Consider the following 292-residue polypeptide: Diaminopimelate epimerase (292 aa).

Substrate-binding residues include N14 and N78. The active-site Proton donor is the C87. Residues 88–89 (GN), N164, N197, and 221–222 (ER) each bind substrate. C230 (proton acceptor) is an active-site residue. 231–232 (GT) provides a ligand contact to substrate.

It belongs to the diaminopimelate epimerase family. In terms of assembly, homodimer.

The protein localises to the cytoplasm. The enzyme catalyses (2S,6S)-2,6-diaminopimelate = meso-2,6-diaminopimelate. The protein operates within amino-acid biosynthesis; L-lysine biosynthesis via DAP pathway; DL-2,6-diaminopimelate from LL-2,6-diaminopimelate: step 1/1. In terms of biological role, catalyzes the stereoinversion of LL-2,6-diaminopimelate (L,L-DAP) to meso-diaminopimelate (meso-DAP), a precursor of L-lysine and an essential component of the bacterial peptidoglycan. The protein is Diaminopimelate epimerase of Leifsonia xyli subsp. xyli (strain CTCB07).